A 478-amino-acid chain; its full sequence is MKMSIRTPPRLLELAGRSLLRDQALAMSTLEELPTELFPPLFMEAFSRRRCEALKLMVQAWPFRRLPLRPLIKMPCLEAFQAVLDGLDALLTQGVRPRRWKLQVLDLQDVCENFWMVWSEAMAHGCFLNAKRNKKPVQDCPRMRGRQPLTVFVELWLKNRTLDEYLTYLLLWVKQRKDLLHLCCKKLKILGMPFRNIRSILKMVNLDCIQEVEVNCKWVLPILTQFTPYLGHMRNLQKLVLSHMDVSRYVSPEQKKEIVTQFTTQFLKLRCLQKLYMNSVSFLEGHLDQLLSCLKTSLKVLTITNCVLLESDLKHLSQCPSISQLKTLDLSGIRLTNYSLVPLQILLEKVAATLEYLDLDDCGIIDSQVNAILPALSRCFELNTFSFCGNPICMATLENLLSHTIILKNLCVELYPAPRESYGADGTLCWSRFAQIRAELMNRVRDLRHPKRILFCTDYCPDCGNRSFYDLEADQYCC.

An LRR 1; degenerate repeat occupies 99 to 126 (RWKLQVLDLQDVCENFWMVWSEAMAHGC). One copy of the LRR 2; degenerate repeat lies at 181–205 (HLCCKKLKILGMPFRNIRSILKMVN). An LRR 3; degenerate repeat occupies 206–232 (LDCIQEVEVNCKWVLPILTQFTPYLGH). The LRR 4; degenerate repeat unit spans residues 233-268 (MRNLQKLVLSHMDVSRYVSPEQKKEIVTQFTTQFLK). LRR repeat units follow at residues 269 to 294 (LRCL…LSCL), 295 to 326 (KTSL…SQLK), 327 to 347 (TLDL…QILL), 351 to 378 (AATL…ALSR), and 379 to 403 (CFEL…LLSH).

The protein belongs to the PRAME family.

This Homo sapiens (Human) protein is PRAME family member 15.